A 160-amino-acid polypeptide reads, in one-letter code: Protein-export protein SecB (160 aa).

The protein belongs to the SecB family. Homotetramer, a dimer of dimers. One homotetramer interacts with 1 SecA dimer.

It localises to the cytoplasm. In terms of biological role, one of the proteins required for the normal export of preproteins out of the cell cytoplasm. It is a molecular chaperone that binds to a subset of precursor proteins, maintaining them in a translocation-competent state. It also specifically binds to its receptor SecA. This Nitrosomonas eutropha (strain DSM 101675 / C91 / Nm57) protein is Protein-export protein SecB.